A 236-amino-acid chain; its full sequence is Protein-S-isoprenylcysteine O-methyltransferase (236 aa).

Helical transmembrane passes span 3–23 (NLHT…LGCV), 24–44 (FGLG…FFAF), 76–96 (AYWL…GKSF), and 108–128 (FLIN…LCLG). S-adenosyl-L-methionine is bound by residues 155-158 (HLLV), tyrosine 163, and 168-171 (HPSY). The helical transmembrane segment at 174 to 194 (FFIWALGTQMLLGNFVSTLLF) threads the bilayer. Position 205 (arginine 205) interacts with substrate. S-adenosyl-L-methionine is bound at residue glutamate 209.

The protein belongs to the class VI-like SAM-binding methyltransferase superfamily. Isoprenylcysteine carboxyl methyltransferase family.

The protein resides in the membrane. The catalysed reaction is [protein]-C-terminal S-[(2E,6E)-farnesyl]-L-cysteine + S-adenosyl-L-methionine = [protein]-C-terminal S-[(2E,6E)-farnesyl]-L-cysteine methyl ester + S-adenosyl-L-homocysteine. Its function is as follows. Mediates C-terminal methylation of the isoprenylated C-terminal cysteine in M-factor. This Schizosaccharomyces pombe (strain 972 / ATCC 24843) (Fission yeast) protein is Protein-S-isoprenylcysteine O-methyltransferase (mam4).